The chain runs to 196 residues: MNQADPRLRAVCLWTLTSAAMSRGDNCTDLLALGIPSITQAWGLWVLLGAVTLLFLISLAAHLSQWTRGRSRSHPGQGRSGESVEEVPLYGNLHYLQTGRLSQDPEPDQQDPTLGGPARAAEEVMCYTSLQLRPPQGRIPGPGTPVKYSEVVLDSEPKSQASGPEPELYASVCAQTRRARASFPDQAYANSQPAAS.

The N-terminal stretch at 1 to 24 is a signal peptide; it reads MNQADPRLRAVCLWTLTSAAMSRG. Over 25–40 the chain is Extracellular; the sequence is DNCTDLLALGIPSITQ. The N-linked (GlcNAc...) asparagine glycan is linked to N26. A helical transmembrane segment spans residues 41 to 61; that stretch reads AWGLWVLLGAVTLLFLISLAA. The Cytoplasmic portion of the chain corresponds to 62–196; sequence HLSQWTRGRS…AYANSQPAAS (135 aa). 2 positions are modified to phosphoserine: S80 and S83. A Phosphotyrosine modification is found at Y90. Residues 90–93 form an interaction with GRB2 region; sequence YGNL. S102 carries the post-translational modification Phosphoserine. Y127 bears the Phosphotyrosine mark. A disordered region spans residues 132 to 167; sequence LRPPQGRIPGPGTPVKYSEVVLDSEPKSQASGPEPE. Position 144 is a phosphothreonine (T144). Residues 146-151 are interaction with PTPN11; that stretch reads VKYSEV. 2 positions are modified to phosphotyrosine: Y148 and Y169. Residues 169 to 172 are interaction with CSK; that stretch reads YASV. S182 bears the Phosphoserine mark. At Y188 the chain carries Phosphotyrosine. Positions 188 to 191 are interaction with GRB2; sequence YANS.

In terms of assembly, homodimer; disulfide-linked. When phosphorylated, interacts with PTPN11/SHP2, GRB2 and CSK. Phosphorylated on tyrosines by LCK, FYN or ZAP70 upon TCR activation; which leads to the recruitment of PTPN11, GRB2 and CSK. Specifically expressed in T- and B-cells. Present in plasma cells but not in germinal center B-cells (at protein level). Expressed in T- and B-cell lymphoma.

The protein localises to the cell membrane. Its function is as follows. Negatively regulates TCR (T-cell antigen receptor)-mediated signaling in T-cells. Involved in positive selection of T-cells. This chain is Signaling threshold-regulating transmembrane adapter 1 (SIT1), found in Homo sapiens (Human).